Consider the following 353-residue polypeptide: Photosystem II D2 protein (353 aa).

Thr2 carries the N-acetylthreonine modification. A Phosphothreonine modification is found at Thr2. A helical transmembrane segment spans residues Cys41–Thr61. His118 lines the chlorophyll a pocket. A helical membrane pass occupies residues Gly125–Pro141. Positions 130 and 143 each coordinate pheophytin a. The chain crosses the membrane as a helical span at residues Val153–Ser166. His198 contributes to the chlorophyll a binding site. A helical transmembrane segment spans residues Ala208 to Asp228. A plastoquinone contacts are provided by His215 and Phe262. A Fe cation-binding site is contributed by His215. His269 is a binding site for Fe cation. Residues Gly279 to Arg295 form a helical membrane-spanning segment.

The protein belongs to the reaction center PufL/M/PsbA/D family. In terms of assembly, PSII is composed of 1 copy each of membrane proteins PsbA, PsbB, PsbC, PsbD, PsbE, PsbF, PsbH, PsbI, PsbJ, PsbK, PsbL, PsbM, PsbT, PsbX, PsbY, PsbZ, Psb30/Ycf12, at least 3 peripheral proteins of the oxygen-evolving complex and a large number of cofactors. It forms dimeric complexes. The D1/D2 heterodimer binds P680, chlorophylls that are the primary electron donor of PSII, and subsequent electron acceptors. It shares a non-heme iron and each subunit binds pheophytin, quinone, additional chlorophylls, carotenoids and lipids. There is also a Cl(-1) ion associated with D1 and D2, which is required for oxygen evolution. The PSII complex binds additional chlorophylls, carotenoids and specific lipids. serves as cofactor.

The protein resides in the plastid. Its subcellular location is the chloroplast thylakoid membrane. The enzyme catalyses 2 a plastoquinone + 4 hnu + 2 H2O = 2 a plastoquinol + O2. Functionally, photosystem II (PSII) is a light-driven water:plastoquinone oxidoreductase that uses light energy to abstract electrons from H(2)O, generating O(2) and a proton gradient subsequently used for ATP formation. It consists of a core antenna complex that captures photons, and an electron transfer chain that converts photonic excitation into a charge separation. The D1/D2 (PsbA/PsbD) reaction center heterodimer binds P680, the primary electron donor of PSII as well as several subsequent electron acceptors. D2 is needed for assembly of a stable PSII complex. This is Photosystem II D2 protein from Atropa belladonna (Belladonna).